A 121-amino-acid polypeptide reads, in one-letter code: MSAVAEIIQTEMPAPFVFTDSAAAKVAELIAEEGNPDLKLRVFVQGGGCSGFQYGFTFDEITNEDDTTMTKNGVSLLIDAMSYQYLVGAEIDYKDDLEGAQFVIKNPNATSTCGCGSSFSA.

Residues Cys49, Cys113, and Cys115 each contribute to the iron-sulfur cluster site.

This sequence belongs to the HesB/IscA family. Homodimer. Requires iron-sulfur cluster as cofactor.

Functionally, required for insertion of 4Fe-4S clusters. In Polaromonas sp. (strain JS666 / ATCC BAA-500), this protein is Putative iron-sulfur cluster insertion protein ErpA.